The following is a 108-amino-acid chain: Iron-sulfur cluster assembly protein CyaY (108 aa).

The protein belongs to the frataxin family.

Its function is as follows. Involved in iron-sulfur (Fe-S) cluster assembly. May act as a regulator of Fe-S biogenesis. The sequence is that of Iron-sulfur cluster assembly protein CyaY from Burkholderia ambifaria (strain MC40-6).